A 698-amino-acid polypeptide reads, in one-letter code: MPSDAPSSLASTRNIGIMAHIDAGKTTTTERILFYTGVNYKIGEVHEGGATMDWMEQEQERGITITSAATTCIWRDHTINIIDTPGHVDFTVEVERSLRVLDGAVAVFDAVAGVEPQSETVWKQADRYNVPRIAFVNKMDRVGAEFHRCVDMMVERLDATPAVIQLPWGVESDFRGVIDLIRMKGLLWKSEDKGASYEVVDIPRDHLEAAQEWRDKLLETVAENDDELMELYLEGEEPSEEQLMAGLRRGTLASKINPVLCGSAFKNKGVQPMLDAVVDFLPNPLDIGATIGHSVSDEDAEVRREPSEDEPFSALAFKIMSDPYVGKLTYIRVYSGRLTGGSPVLNSTKDRKERIGRILQMHANHREDRDGVGAGQIVAVVGLKNTTTGDTLCDPNAPVILESMTFPAPVIHVAIEPKTKADQQKLGTAIQRLAEEDPTFQVRTDEETGQTIIAGMGELHLDVLVDRMRREYGVEANVGKPQVAYRETIRRKVEKVDYTHKKQTGGSGQYARVIINLEPSGGDGGGYEFENKVTGGRIPREYIPSVDAGCQEAMEFGVLAGYPLVDVKVTLLDGQYHDVDSSELAFKIAGSMAFKDAARKADPVLLEPLMAVEVTTPEDHMGDVIGDLNSRRGQIQAMEERGGSRIVRAQVPLSEMFGYVGDLRSKTSGRASYSMQFDSYAEVPGNVAKEIIAKARGE.

A tr-type G domain is found at 10-285 (ASTRNIGIMA…AVVDFLPNPL (276 aa)). GTP is bound by residues 19 to 26 (AHIDAGKT), 83 to 87 (DTPGH), and 137 to 140 (NKMD).

This sequence belongs to the TRAFAC class translation factor GTPase superfamily. Classic translation factor GTPase family. EF-G/EF-2 subfamily.

It is found in the cytoplasm. Functionally, catalyzes the GTP-dependent ribosomal translocation step during translation elongation. During this step, the ribosome changes from the pre-translocational (PRE) to the post-translocational (POST) state as the newly formed A-site-bound peptidyl-tRNA and P-site-bound deacylated tRNA move to the P and E sites, respectively. Catalyzes the coordinated movement of the two tRNA molecules, the mRNA and conformational changes in the ribosome. This is Elongation factor G from Frankia alni (strain DSM 45986 / CECT 9034 / ACN14a).